The following is a 229-amino-acid chain: MAIGKRLKKIREGIDRTKLYPLDEAVKLVKERAISKFDETIEVAINLGVDPRHADQMVRGVVMLPNGTGRTVRVGVFARGAKADEAKAAGADVVGAEDLVEQVQAGNINFDRCIATPDMMPLVGRLGKVLGPRGMMPNPKIGTVTMDVAGAVKGAKGGSVEFRVEKAGIIQAGVGKASFDADKLVENIKALADAVNKAKPSGAKGTYIQRVAVSSTMGPGVKVEPGTVH.

Part of the 50S ribosomal subunit.

Binds directly to 23S rRNA. The L1 stalk is quite mobile in the ribosome, and is involved in E site tRNA release. Functionally, protein L1 is also a translational repressor protein, it controls the translation of the L11 operon by binding to its mRNA. This Rhodopseudomonas palustris (strain ATCC BAA-98 / CGA009) protein is Large ribosomal subunit protein uL1.